A 111-amino-acid chain; its full sequence is Large ribosomal subunit protein eL31 (111 aa).

Belongs to the eukaryotic ribosomal protein eL31 family.

The protein is Large ribosomal subunit protein eL31 (rpl31) of Dictyostelium discoideum (Social amoeba).